The chain runs to 606 residues: Endo-beta-1,4-xylanase Xyn10C (606 aa).

The first 19 residues, 1–19, serve as a signal peptide directing secretion; it reads MKKIQQLLMLSLISSTLIA. C20 carries the N-palmitoyl cysteine lipid modification. Residue C20 is the site of S-diacylglycerol cysteine attachment. Positions 23-64 are disordered; it reads GGGGGSTPTTSSSPQSSSPASTPSSASSSSIISSSSLSSSLS. Residues 29-64 show a composition bias toward low complexity; sequence TPTTSSSPQSSSPASTPSSASSSSIISSSSLSSSLS. The region spanning 91 to 242 is the CBM15 domain; the sequence is GNVVIEVDMA…KSVTITLAQE (152 aa). N106 and Q171 together coordinate a carbohydrate. An intrachain disulfide couples C183 to C200. Q217 is an a carbohydrate binding site. Positions 245-596 constitute a GH10 domain; that stretch reads SANVDHLRDL…KPALRGFADA (352 aa). Substrate is bound by residues 296-299, H332, and N384; that span reads NIMK. E385 serves as the catalytic Proton donor. The active-site Nucleophile is E497. W552 serves as a coordination point for substrate.

This sequence belongs to the glycosyl hydrolase 10 (cellulase F) family.

The protein resides in the cell outer membrane. The catalysed reaction is Endohydrolysis of (1-&gt;4)-beta-D-xylosidic linkages in xylans.. It participates in glycan degradation; xylan degradation. Endo-acting xylanase which specifically cleaves internal linkages on the xylan backbone, releasing xylooligosaccharides. Is able to hydrolyze oat spelt xylan, the arabinoxylans from wheat and rye, and glucuronoxylan. Also displays very low activity against xylooligosaccharides. During the xylan degradation process, Xyn10C may act on the soluble xylans and long xylooligosaccharides products released by the secreted xylanases Xyn11A, Xyn11B and Xyn10A. This is Endo-beta-1,4-xylanase Xyn10C (xyn10C) from Cellvibrio japonicus (Pseudomonas fluorescens subsp. cellulosa).